A 126-amino-acid chain; its full sequence is Histone H2B.5 (126 aa).

Positions 1-27 are enriched in basic and acidic residues; sequence MAPKAEKKPSEKAPKADKKITKEGGSE. The segment at 1 to 34 is disordered; it reads MAPKAEKKPSEKAPKADKKITKEGGSERKKKTKK. A2 is subject to N,N,N-trimethylalanine; alternate. At A2 the chain carries N,N-dimethylalanine; alternate. A2 bears the N-methylalanine; alternate mark. The residue at position 4 (K4) is an N6-methyllysine. 4 positions are modified to N6-acetyllysine: K7, K12, K18, and K19. K122 is covalently cross-linked (Glycyl lysine isopeptide (Lys-Gly) (interchain with G-Cter in ubiquitin)).

The protein belongs to the histone H2B family. As to quaternary structure, the nucleosome is a histone octamer containing two molecules each of H2A, H2B, H3 and H4 assembled in one H3-H4 heterotetramer and two H2A-H2B heterodimers. The octamer wraps approximately 147 bp of DNA. Can be acetylated to form H2BK6ac, H2BK33ac and H2BK34ac. Post-translationally, monoubiquitinated by BRE1 to form H2BK143ub1 and deubiquitinated by UBP26. Required for heterochromatic histone H3 di- and trimethylation at H3K4me. May give a specific tag for epigenetic transcriptional activation.

Its subcellular location is the nucleus. The protein resides in the chromosome. Core component of nucleosome. Nucleosomes wrap and compact DNA into chromatin, limiting DNA accessibility to the cellular machineries which require DNA as a template. Histones thereby play a central role in transcription regulation, DNA repair, DNA replication and chromosomal stability. DNA accessibility is regulated via a complex set of post-translational modifications of histones, also called histone code, and nucleosome remodeling. The sequence is that of Histone H2B.5 from Arabidopsis thaliana (Mouse-ear cress).